The primary structure comprises 177 residues: O-acetyl-ADP-ribose deacetylase (177 aa).

Positions 1–175 constitute a Macro domain; the sequence is MNSRIHVIHG…LYQRLLTQQG (175 aa). Substrate contacts are provided by residues 11-12, N25, 33-35, and 122-126; these read DI, GVD, and STGVY. D35 functions as the Proton acceptor in the catalytic mechanism.

This sequence belongs to the MacroD-type family. YmdB subfamily. In terms of assembly, homodimer. Interacts with RNase III.

The catalysed reaction is 3''-O-acetyl-ADP-D-ribose + H2O = ADP-D-ribose + acetate + H(+). It catalyses the reaction 2''-O-acetyl-ADP-D-ribose + H2O = ADP-D-ribose + acetate + H(+). Its function is as follows. Deacetylates O-acetyl-ADP ribose to yield ADP-ribose and free acetate. Down-regulates ribonuclease 3 (RNase III) activity. Acts by interacting directly with the region of the ribonuclease that is required for dimerization/activation. The protein is O-acetyl-ADP-ribose deacetylase of Citrobacter rodentium (strain ICC168) (Citrobacter freundii biotype 4280).